The following is a 445-amino-acid chain: Tubulin beta-4B chain (445 aa).

Residues 1–4 (MREI) carry the MREI motif motif. Q11 is a binding site for GTP. T55 is modified (phosphothreonine). K58 is subject to N6-acetyllysine. Positions 69, 138, 142, 143, and 144 each coordinate GTP. E69 contributes to the Mg(2+) binding site. Position 172 is a phosphoserine; by CDK1 (S172). GTP contacts are provided by N204 and N226. Positions 426-445 (QDATAEEEGEFEEEAEEEVA) are disordered. Residues 429 to 445 (TAEEEGEFEEEAEEEVA) show a composition bias toward acidic residues. At E438 the chain carries 5-glutamyl polyglutamate.

It belongs to the tubulin family. Dimer of alpha and beta chains. A typical microtubule is a hollow water-filled tube with an outer diameter of 25 nm and an inner diameter of 15 nM. Alpha-beta heterodimers associate head-to-tail to form protofilaments running lengthwise along the microtubule wall with the beta-tubulin subunit facing the microtubule plus end conferring a structural polarity. Microtubules usually have 13 protofilaments but different protofilament numbers can be found in some organisms and specialized cells. Component of sperm flagellar doublet microtubules. It depends on Mg(2+) as a cofactor. Some glutamate residues at the C-terminus are polyglycylated, resulting in polyglycine chains on the gamma-carboxyl group. Glycylation is mainly limited to tubulin incorporated into axonemes (cilia and flagella) whereas glutamylation is prevalent in neuronal cells, centrioles, axonemes, and the mitotic spindle. Both modifications can coexist on the same protein on adjacent residues, and lowering polyglycylation levels increases polyglutamylation, and reciprocally. Cilia and flagella glycylation is required for their stability and maintenance. Flagella glycylation controls sperm motility. In terms of processing, some glutamate residues at the C-terminus are polyglutamylated, resulting in polyglutamate chains on the gamma-carboxyl group. Polyglutamylation plays a key role in microtubule severing by spastin (SPAST). SPAST preferentially recognizes and acts on microtubules decorated with short polyglutamate tails: severing activity by SPAST increases as the number of glutamates per tubulin rises from one to eight, but decreases beyond this glutamylation threshold. Glutamylation is also involved in cilia motility. Post-translationally, phosphorylated on Ser-172 by CDK1 during the cell cycle, from metaphase to telophase, but not in interphase. This phosphorylation inhibits tubulin incorporation into microtubules.

The protein resides in the cytoplasm. It is found in the cytoskeleton. Its subcellular location is the flagellum axoneme. In terms of biological role, tubulin is the major constituent of microtubules, a cylinder consisting of laterally associated linear protofilaments composed of alpha- and beta-tubulin heterodimers. Microtubules grow by the addition of GTP-tubulin dimers to the microtubule end, where a stabilizing cap forms. Below the cap, tubulin dimers are in GDP-bound state, owing to GTPase activity of alpha-tubulin. The chain is Tubulin beta-4B chain (TUBB4B) from Bos taurus (Bovine).